The primary structure comprises 377 residues: Spore coat protein SA (377 aa).

This sequence belongs to the glycosyltransferase group 1 family. Glycosyltransferase 4 subfamily.

The protein is Spore coat protein SA (cotSA) of Bacillus subtilis (strain 168).